The sequence spans 503 residues: Ribonuclease Y (503 aa).

The helical transmembrane segment at G2–L22 threads the bilayer. The 61-residue stretch at T193–L253 folds into the KH domain. The HD domain occupies V319–S412.

It belongs to the RNase Y family.

Its subcellular location is the cell membrane. Endoribonuclease that initiates mRNA decay. The chain is Ribonuclease Y from Mesoplasma florum (strain ATCC 33453 / NBRC 100688 / NCTC 11704 / L1) (Acholeplasma florum).